We begin with the raw amino-acid sequence, 104 residues long: Cysteine-rich and transmembrane domain-containing protein 1 (104 aa).

Composition is skewed to pro residues over residues 1–25 and 33–47; these read MNPENPPPYPGPGPTAPYPPYPQQP and GAPPPQGYPYPPPQG. The tract at residues 1 to 47 is disordered; it reads MNPENPPPYPGPGPTAPYPPYPQQPMGPMGPMGAPPPQGYPYPPPQG. Residues 81-98 traverse the membrane as a helical segment; sequence LGPSTCLTACWTALCCCC.

The protein belongs to the CYSTM1 family.

The protein localises to the membrane. The protein is Cysteine-rich and transmembrane domain-containing protein 1 (Cystm1) of Mus musculus (Mouse).